The following is a 263-amino-acid chain: 22 kDa alpha-zein 16 (263 aa).

An N-terminal signal peptide occupies residues 1-21 (MATKILALLALLALLVSATNA).

This sequence belongs to the zein family. As to expression, expressed in developing endosperm.

Functionally, zeins are major seed storage proteins. This is 22 kDa alpha-zein 16 from Zea mays (Maize).